The following is a 130-amino-acid chain: Small ribosomal subunit protein uS8 (130 aa).

This sequence belongs to the universal ribosomal protein uS8 family. As to quaternary structure, part of the 30S ribosomal subunit. Contacts proteins S5 and S12.

One of the primary rRNA binding proteins, it binds directly to 16S rRNA central domain where it helps coordinate assembly of the platform of the 30S subunit. The sequence is that of Small ribosomal subunit protein uS8 from Hahella chejuensis (strain KCTC 2396).